Consider the following 92-residue polypeptide: MELVPKFLAGLILLTLCVGGCYAQHWSYGLRPGGKRNAENLIDSFQEIAKEADQLAEPQHFECTISQPRSPLRALKGALESLIEEETGQKKI.

The signal sequence occupies residues 1–23 (MELVPKFLAGLILLTLCVGGCYA). Gln24 carries the post-translational modification Pyrrolidone carboxylic acid. Gly33 bears the Glycine amide mark.

The protein belongs to the GnRH family.

It localises to the secreted. Stimulates the secretion of gonadotropins; it stimulates the secretion of both luteinizing and follicle-stimulating hormones. The chain is Progonadoliberin-1 (GNRH1) from Tupaia belangeri (Common tree shrew).